The chain runs to 463 residues: L-seryl-tRNA(Sec) selenium transferase (463 aa).

An N6-(pyridoxal phosphate)lysine modification is found at Lys-295.

The protein belongs to the SelA family. As to quaternary structure, homodecamer; pentamer of dimers. Binds only one seryl-tRNA(Sec) per dimer. Requires pyridoxal 5'-phosphate as cofactor.

It is found in the cytoplasm. It catalyses the reaction L-seryl-tRNA(Sec) + selenophosphate + H(+) = L-selenocysteinyl-tRNA(Sec) + phosphate. It functions in the pathway aminoacyl-tRNA biosynthesis; selenocysteinyl-tRNA(Sec) biosynthesis; selenocysteinyl-tRNA(Sec) from L-seryl-tRNA(Sec) (bacterial route): step 1/1. Converts seryl-tRNA(Sec) to selenocysteinyl-tRNA(Sec) required for selenoprotein biosynthesis. The sequence is that of L-seryl-tRNA(Sec) selenium transferase from Escherichia coli O17:K52:H18 (strain UMN026 / ExPEC).